A 533-amino-acid polypeptide reads, in one-letter code: Retinoid isomerohydrolase (533 aa).

Serine 2 is subject to N-acetylserine. 2 positions are modified to phosphothreonine: threonine 101 and threonine 105. Residue cysteine 112 is the site of S-palmitoyl cysteine; in membrane form attachment. At lysine 113 the chain carries N6-acetyllysine. Position 117 is a phosphoserine (serine 117). A Fe cation-binding site is contributed by histidine 180. Cysteine 231 is lipidated: S-palmitoyl cysteine; in membrane form. Fe cation is bound by residues histidine 241 and histidine 313. 2 S-palmitoyl cysteine; in membrane form lipidation sites follow: cysteine 329 and cysteine 330. Histidine 527 serves as a coordination point for Fe cation.

The protein belongs to the carotenoid oxygenase family. As to quaternary structure, interacts with MYO7A; this mediates light-dependent intracellular transport of RPE65. Fe(2+) is required as a cofactor. Post-translationally, palmitoylation by LRAT regulates ligand binding specificity; the palmitoylated form (membrane form) specifically binds all-trans-retinyl-palmitate, while the soluble unpalmitoylated form binds all-trans-retinol (vitamin A). Retinal pigment epithelium specific.

It localises to the cytoplasm. It is found in the cell membrane. The protein localises to the microsome membrane. It catalyses the reaction an all-trans-retinyl ester + H2O = 11-cis-retinol + a fatty acid + H(+). The catalysed reaction is lutein = (3R,3'S)-zeaxanthin. It carries out the reaction all-trans-retinyl hexadecanoate + H2O = 11-cis-retinol + hexadecanoate + H(+). Critical isomerohydrolase in the retinoid cycle involved in regeneration of 11-cis-retinal, the chromophore of rod and cone opsins. Catalyzes the cleavage and isomerization of all-trans-retinyl fatty acid esters to 11-cis-retinol which is further oxidized by 11-cis retinol dehydrogenase to 11-cis-retinal for use as visual chromophore. Essential for the production of 11-cis retinal for both rod and cone photoreceptors. Also capable of catalyzing the isomerization of lutein to meso-zeaxanthin an eye-specific carotenoid. The soluble form binds vitamin A (all-trans-retinol), making it available for LRAT processing to all-trans-retinyl ester. The membrane form, palmitoylated by LRAT, binds all-trans-retinyl esters, making them available for IMH (isomerohydrolase) processing to all-cis-retinol. The soluble form is regenerated by transferring its palmitoyl groups onto 11-cis-retinol, a reaction catalyzed by LRAT. In Bos taurus (Bovine), this protein is Retinoid isomerohydrolase (RPE65).